A 393-amino-acid chain; its full sequence is Putative serpin-Z6A (393 aa).

The RCL stretch occupies residues 336–360 (GTEAAAATAVLMEGAARYAPPPPPR).

This sequence belongs to the serpin family.

Probable serine protease inhibitor. This Oryza sativa subsp. japonica (Rice) protein is Putative serpin-Z6A.